The chain runs to 594 residues: Proteasome-associated ATPase (594 aa).

Residues 1–12 show a composition bias toward polar residues; that stretch reads MTETSANKPENT. The tract at residues 1 to 20 is disordered; the sequence is MTETSANKPENTQAHEGRDY. Residues 18–71 adopt a coiled-coil conformation; sequence RDYSVLERQFNVLRDKLRNVDRQLAAATQNNTKMTTTLQSAKAEILRLKSALEK. 282-287 is an ATP binding site; that stretch reads GCGKTL. The interval 593-594 is docks into pockets in the proteasome alpha-ring; that stretch reads YL.

The protein belongs to the AAA ATPase family. In terms of assembly, homohexamer. Assembles into a hexameric ring structure that caps the 20S proteasome core. Strongly interacts with the prokaryotic ubiquitin-like protein Pup through a hydrophobic interface; the interacting region of ARC lies in its N-terminal coiled-coil domain. There is one Pup binding site per ARC hexamer ring. Upon ATP-binding, the C-terminus of ARC interacts with the alpha-rings of the proteasome core, possibly by binding to the intersubunit pockets.

It participates in protein degradation; proteasomal Pup-dependent pathway. ATPase which is responsible for recognizing, binding, unfolding and translocation of pupylated proteins into the bacterial 20S proteasome core particle. May be essential for opening the gate of the 20S proteasome via an interaction with its C-terminus, thereby allowing substrate entry and access to the site of proteolysis. Thus, the C-termini of the proteasomal ATPase may function like a 'key in a lock' to induce gate opening and therefore regulate proteolysis. This chain is Proteasome-associated ATPase, found in Renibacterium salmoninarum (strain ATCC 33209 / DSM 20767 / JCM 11484 / NBRC 15589 / NCIMB 2235).